We begin with the raw amino-acid sequence, 283 residues long: Pantothenate synthetase (283 aa).

Residue 30–37 (MGALHEGH) participates in ATP binding. Catalysis depends on H37, which acts as the Proton donor. Q61 contributes to the (R)-pantoate binding site. Q61 is a beta-alanine binding site. 147–150 (GEKD) is an ATP binding site. Q153 provides a ligand contact to (R)-pantoate. Residues V176 and 184 to 187 (VSSR) each bind ATP.

It belongs to the pantothenate synthetase family. In terms of assembly, homodimer.

It is found in the cytoplasm. The enzyme catalyses (R)-pantoate + beta-alanine + ATP = (R)-pantothenate + AMP + diphosphate + H(+). It participates in cofactor biosynthesis; (R)-pantothenate biosynthesis; (R)-pantothenate from (R)-pantoate and beta-alanine: step 1/1. Catalyzes the condensation of pantoate with beta-alanine in an ATP-dependent reaction via a pantoyl-adenylate intermediate. In Chlorobium luteolum (strain DSM 273 / BCRC 81028 / 2530) (Pelodictyon luteolum), this protein is Pantothenate synthetase.